Reading from the N-terminus, the 416-residue chain is FBD-associated F-box protein At3g52670 (416 aa).

One can recognise an F-box domain in the interval 9 to 62; sequence EDRMNQLPEDLILRILSFLPTELVIATSVLSKQWRSLWKLVPNLEFDSDDYESE. An FBD domain is found at 327–378; that stretch reads KWNEPKYVPECLLSHLETFVWIRYDWEREEEKEVATYILRNARWLKKGTIST.

The polypeptide is FBD-associated F-box protein At3g52670 (Arabidopsis thaliana (Mouse-ear cress)).